A 737-amino-acid polypeptide reads, in one-letter code: ARMADILLO BTB ARABIDOPSIS PROTEIN 1 (737 aa).

ARM repeat units lie at residues 112 to 154, 165 to 212, 215 to 254, 257 to 296, 299 to 338, 341 to 380, 382 to 421, 456 to 495, and 497 to 536; these read DENV…KDCA, PGYQ…NIAH, PRIK…TVSF, DENK…NLVH, PDIK…QFAA, SDCK…RLAQ, AHNQ…GLAD, LKRL…HLCD, and KDGK…ELAK. The BTB domain maps to 568–635; sequence SDVTFLIDGK…IYSGRINIAK (68 aa).

As to quaternary structure, forms a heterodimeric complex with TCP24. Interacts with the origin recognition complex (preRC) components ORC1A, ORC1B, CDT1A and CDT1B. Interacts with DUF7/AIP1. As to expression, weakly expressed in the emerging lateral roots and mainly expressed in the shoot apex, young leaves and flower buds.

The protein resides in the nucleus. It functions in the pathway protein modification; protein ubiquitination. Its function is as follows. May act as a substrate-specific adapter of an E3 ubiquitin-protein ligase complex (CUL3-RBX1-BTB) which mediates the ubiquitination and subsequent proteasomal degradation of target proteins. In association with TCP24, exerts a negative role in cell proliferation in leaves, possibly by inhibiting mitotic DNA replication. This is ARMADILLO BTB ARABIDOPSIS PROTEIN 1 (ABAP1) from Arabidopsis thaliana (Mouse-ear cress).